The chain runs to 439 residues: Transcription factor pydF (439 aa).

The span at 1–18 (MGRPQRADKQRRETDGPQ) shows a compositional bias: basic and acidic residues. Disordered regions lie at residues 1–53 (MGRP…GYAR), 143–177 (HVEKATAERPGNDGSSSPSSSLLRTSSSPSQQAVE), and 239–262 (AFRDGQNNGTSRPNTAASQNMQQH). Residues 20 to 35 (SRPSLTQAQKNSTTIR) show a composition bias toward polar residues. Positions 143-153 (HVEKATAERPG) are enriched in basic and acidic residues. Positions 157-172 (SSSPSSSLLRTSSSPS) are enriched in low complexity. A compositionally biased stretch (polar residues) spans 243–260 (GQNNGTSRPNTAASQNMQ).

It localises to the nucleus. Functionally, transcription factor; part of the gene cluster that mediates the biosynthesis of pyrrocidines, fungal natural products containing a macrocyclic para-cyclophane connected to a decahydrofluorene ring system that show potent antibiotic activities toward Gram-negative bacteria. The protein is Transcription factor pydF of Acremonium sp.